The sequence spans 381 residues: Succinyl-diaminopimelate desuccinylase (381 aa).

Residue His-68 coordinates Zn(2+). Residue Asp-70 is part of the active site. Zn(2+) is bound at residue Asp-101. Glu-135 serves as the catalytic Proton acceptor. 3 residues coordinate Zn(2+): Glu-136, Glu-164, and His-350.

This sequence belongs to the peptidase M20A family. DapE subfamily. In terms of assembly, homodimer. The cofactor is Zn(2+). Co(2+) serves as cofactor.

It catalyses the reaction N-succinyl-(2S,6S)-2,6-diaminopimelate + H2O = (2S,6S)-2,6-diaminopimelate + succinate. It participates in amino-acid biosynthesis; L-lysine biosynthesis via DAP pathway; LL-2,6-diaminopimelate from (S)-tetrahydrodipicolinate (succinylase route): step 3/3. Functionally, catalyzes the hydrolysis of N-succinyl-L,L-diaminopimelic acid (SDAP), forming succinate and LL-2,6-diaminopimelate (DAP), an intermediate involved in the bacterial biosynthesis of lysine and meso-diaminopimelic acid, an essential component of bacterial cell walls. The polypeptide is Succinyl-diaminopimelate desuccinylase (Neisseria gonorrhoeae (strain ATCC 700825 / FA 1090)).